The sequence spans 1151 residues: Trafficking protein particle complex subunit 9 (1151 aa).

The protein belongs to the NIBP family. Part of the multisubunit TRAPP (transport protein particle) complex.

Its subcellular location is the golgi apparatus. It is found in the cis-Golgi network. The protein localises to the endoplasmic reticulum. It localises to the cytoplasm. Functions as an activator of NF-kappa-B through increased phosphorylation of the IKK complex. May function in neuronal cells differentiation. May play a role in vesicular transport from endoplasmic reticulum to Golgi. This chain is Trafficking protein particle complex subunit 9 (trappc9), found in Xenopus laevis (African clawed frog).